The primary structure comprises 131 residues: Fluoride-specific ion channel FluC (131 aa).

Transmembrane regions (helical) follow at residues 4-24 (LWIMIGSALGGAARFWVTGFV), 30-50 (GIFPWGTVLINVSGSFLIGFF), 68-88 (LFVMIGLCGGFTTFSSFSLQT), and 104-124 (IALSVVFCLLAVWLGHVVAVA). The Na(+) site is built by Gly76 and Thr79.

Belongs to the fluoride channel Fluc/FEX (TC 1.A.43) family.

It is found in the cell inner membrane. It catalyses the reaction fluoride(in) = fluoride(out). Its activity is regulated as follows. Na(+) is not transported, but it plays an essential structural role and its presence is essential for fluoride channel function. Fluoride-specific ion channel. Important for reducing fluoride concentration in the cell, thus reducing its toxicity. The chain is Fluoride-specific ion channel FluC from Methylocella silvestris (strain DSM 15510 / CIP 108128 / LMG 27833 / NCIMB 13906 / BL2).